The following is a 504-amino-acid chain: Maturase K (504 aa).

It belongs to the intron maturase 2 family. MatK subfamily.

Its subcellular location is the plastid. The protein localises to the chloroplast. In terms of biological role, usually encoded in the trnK tRNA gene intron. Probably assists in splicing its own and other chloroplast group II introns. This is Maturase K from Barbarea vulgaris (Yellow rocket).